The primary structure comprises 417 residues: Imidazolonepropionase (417 aa).

Fe(3+) is bound by residues histidine 77 and histidine 79. Histidine 77 and histidine 79 together coordinate Zn(2+). 4-imidazolone-5-propanoate-binding residues include arginine 86, tyrosine 149, and histidine 182. Tyrosine 149 provides a ligand contact to N-formimidoyl-L-glutamate. Position 247 (histidine 247) interacts with Fe(3+). Histidine 247 contacts Zn(2+). Glutamine 250 provides a ligand contact to 4-imidazolone-5-propanoate. Position 322 (aspartate 322) interacts with Fe(3+). Aspartate 322 serves as a coordination point for Zn(2+). Residues asparagine 324 and glycine 326 each coordinate N-formimidoyl-L-glutamate. Threonine 327 contributes to the 4-imidazolone-5-propanoate binding site.

The protein belongs to the metallo-dependent hydrolases superfamily. HutI family. Zn(2+) is required as a cofactor. The cofactor is Fe(3+).

The protein resides in the cytoplasm. It catalyses the reaction 4-imidazolone-5-propanoate + H2O = N-formimidoyl-L-glutamate. The protein operates within amino-acid degradation; L-histidine degradation into L-glutamate; N-formimidoyl-L-glutamate from L-histidine: step 3/3. Functionally, catalyzes the hydrolytic cleavage of the carbon-nitrogen bond in imidazolone-5-propanoate to yield N-formimidoyl-L-glutamate. It is the third step in the universal histidine degradation pathway. The sequence is that of Imidazolonepropionase from Cupriavidus necator (strain ATCC 17699 / DSM 428 / KCTC 22496 / NCIMB 10442 / H16 / Stanier 337) (Ralstonia eutropha).